The chain runs to 240 residues: Short palate, lung and nasal epithelium carcinoma-associated protein 2B (240 aa).

The signal sequence occupies residues 1–19 (MVQLWKLVLLCGLLAGTSA). Residues cysteine 163 and cysteine 206 are joined by a disulfide bond.

Belongs to the BPI/LBP/Plunc superfamily. Plunc family. As to expression, parotid glands.

It localises to the secreted. This is Short palate, lung and nasal epithelium carcinoma-associated protein 2B (SPLUNC2B) from Bos taurus (Bovine).